We begin with the raw amino-acid sequence, 1226 residues long: Chitin synthase IV (1226 aa).

Residues 1 to 205 (MSLPERPGGS…SRKNPATAEQ (205 aa)) are disordered. Residues 49 to 65 (SVSSYAETISNPHANTE) are compositionally biased toward polar residues. The span at 66–75 (TLPLSPTHPT) shows a compositional bias: low complexity. A compositionally biased stretch (basic and acidic residues) spans 94–107 (IRPERNRIDKDHRN). Residues 134–151 (DVSTEPSGGSQTHGSFAD) are compositionally biased toward polar residues. The segment covering 163–172 (MSGDDQEKGN) has biased composition (basic and acidic residues). A compositionally biased stretch (basic residues) spans 173 to 198 (TRVKSRPRRSKSGKITKETRHRKSRK). A helical transmembrane segment spans residues 246–266 (MGLISIILVIMAIVGFLTFGF). 3 N-linked (GlcNAc...) asparagine glycosylation sites follow: Asn-381, Asn-421, and Asn-443. The helical transmembrane segment at 516-536 (ILILSVVGTRFVLALIFQWFI) threads the bilayer. Residues 572–671 (LPGDVGSSAM…PGPAGFIHDS (100 aa)) form a disordered region. 2 stretches are compositionally biased toward polar residues: residues 580 to 601 (AMGSSDRTSKRGSSFLPTTSRF) and 618 to 643 (TTMSSQGPASALLNPNSIYRQGNDSR). Residue Asn-640 is glycosylated (N-linked (GlcNAc...) asparagine). Residues 649–666 (PDPYSSAASPSDGPGPAG) are compositionally biased toward low complexity. Asn-787 and Asn-1035 each carry an N-linked (GlcNAc...) asparagine glycan. 3 helical membrane-spanning segments follow: residues 1060–1080 (FVVFVELVGTLVLPAAIAFTF), 1094–1114 (IIPLVLLALILGLPGLLILVT), and 1118–1138 (WSYVVWMLIYLVSLPIWNFVL).

It belongs to the chitin synthase family. Class IV subfamily. Highly expressed in conidia.

The protein localises to the cell membrane. The enzyme catalyses [(1-&gt;4)-N-acetyl-beta-D-glucosaminyl](n) + UDP-N-acetyl-alpha-D-glucosamine = [(1-&gt;4)-N-acetyl-beta-D-glucosaminyl](n+1) + UDP + H(+). Its function is as follows. Polymerizes chitin, a structural polymer of the cell wall and septum, by transferring the sugar moiety of UDP-GlcNAc to the non-reducing end of the growing chitin polymer. Contributes to the production of conidia and the ability of fungal conidia to germinate. Involved in fungal stress tolerances. This Metarhizium acridum (strain CQMa 102) protein is Chitin synthase IV.